A 387-amino-acid chain; its full sequence is Delta(12)-acyl-lipid-desaturase (387 aa).

A disordered region spans residues 1–31 (MGAGGRMTVPNKWEGEGDEKSQKPVQRVPSA). Residues 13-22 (WEGEGDEKSQ) are compositionally biased toward basic and acidic residues. The next 2 helical transmembrane spans lie at 58-78 (SYVL…TTYI) and 88-108 (AAWP…WVIA). The Histidine box-1 signature appears at 109 to 113 (HECGH). Residues 121–141 (WVDDCVGLVLHSALLVPYFSW) form a helical membrane-spanning segment. The short motif at 145–149 (HRRHH) is the Histidine box-2 element. A run of 3 helical transmembrane segments spans residues 183-203 (VMTL…LNVS), 229-249 (IYIS…IAAA), and 251-271 (GLAW…AFLV). The Histidine box-3 motif lies at 319-323 (HVAHH).

The protein belongs to the fatty acid desaturase type 1 family.

It localises to the membrane. Its pathway is lipid metabolism; polyunsaturated fatty acid biosynthesis. Functionally, delta(12)-fatty acid desaturase producing in a heterologous system linoleic acid (18:2(9Z,12Z)) and to a lower extent hexadecadienoic acid (16:2(9Z,12Z)). The sequence is that of Delta(12)-acyl-lipid-desaturase from Punica granatum (Pomegranate).